Consider the following 472-residue polypeptide: uncharacterized protein (472 aa).

The next 14 helical transmembrane spans lie at 14 to 34, 53 to 73, 80 to 100, 113 to 133, 142 to 162, 169 to 189, 202 to 222, 227 to 247, 263 to 283, 302 to 322, 333 to 353, 359 to 379, 405 to 427, and 437 to 457; these read VIVGILLAGAFVAILNQTLLI, WLTTSFMLTNGILIPITAFLI, ALLITAMSIFTAGTVVGAFAP, AAGAGIMMPLMQTVFLTIFPI, MVGLVISFAPAIGPTLSGWAV, SLFYIILPFAVIDLILASILM, ILSVILSTFGFGGLLYGFSSV, WSSSTVLISLLVGVIALLLFI, FTFGVFSLTTLLGTLVFALLI, FDTGLMLLPGAVVMGFMSPII, GLAIAGFCIIFLTSLPFMQLT, AWIVVLYTVRLLGTAMIMMPV, VGGSIGTALLVSVMSNQAAHAGT, and GMNAAFIVAAVIALVGFLLSF.

The protein belongs to the major facilitator superfamily. EmrB family.

It is found in the cell membrane. This is an uncharacterized protein from Bacillus subtilis (strain 168).